Reading from the N-terminus, the 1783-residue chain is Trans-splicing factor Raa3, chloroplastic (1783 aa).

A chloroplast-targeting transit peptide spans 1-40; it reads MKADLATAKGSSPAFSAPRTYRARLLSRCLNKCFNTVLVS. 8 disordered regions span residues 97–378, 420–484, 563–610, 652–709, 918–971, 1395–1427, 1476–1506, and 1620–1639; these read ATTH…VGVN, ATSA…VAAQ, ARVG…SATK, STEP…SPAA, AAPT…QRAS, RDAKRHVRQSAAAAAAAAAAAQDQRQEQHQQHQ, PAPAHMQQQPQSSGTGCQKSRRRRMRYRRSR, and VKGRGRGRRTAARATTDVQG. Gly residues predominate over residues 105–118; sequence DSGGQGPAAAGGRG. Composition is skewed to low complexity over residues 126–157, 186–205, and 224–242; these read QAAASAATTVSAAPQTGATKPAATAKTTPQRP, AVDAASDAAPDVAAASPAPA, and AGKPRASGRAPAAPGVGPQ. A compositionally biased stretch (basic and acidic residues) spans 256-273; the sequence is DESHMGLTHRDQGHDERI. The span at 277 to 289 shows a compositional bias: low complexity; that stretch reads AGEAWKAGAVAAP. The segment covering 307-316 has biased composition (polar residues); the sequence is LASSALGTHS. Low complexity-rich tracts occupy residues 343-374, 420-436, 577-599, 655-669, 676-709, 928-970, and 1403-1417; these read SGSSSSSSGRNSSSNSNTSTSSTSNGVTITSN, ATSAASSSTSSASSSSS, RPVQGQSGQVPQVGQGPVQSQPG, PLAASAPTTSLASAS, SSSNAHSSAAASEAAAGTVRAPTDTAAPAASPAA, SAAA…PQRA, and QSAAAAAAAAAAAQD. Basic residues-rich tracts occupy residues 1494 to 1506 and 1620 to 1630; these read KSRRRRMRYRRSR and VKGRGRGRRTA. In terms of domain architecture, RAP spans 1713 to 1772; that stretch reads LAVGAAAGGAVIRNSRWLLSGAGALRRRLLTHAGWLVVPVRERQWKDLRSAEQQRRVVRE.

Part of a 1700 kDa complex that includes the precursor RNA to exon 1 and the tscA RNA.

It localises to the plastid. The protein resides in the chloroplast stroma. Required for trans-splicing of exons 1 and 2 of the chloroplast encoded psaA mRNA (a group II intron). May be required for stability of the chloroplast RNA-protein complex in which it is found. The chain is Trans-splicing factor Raa3, chloroplastic (RAA3) from Chlamydomonas reinhardtii (Chlamydomonas smithii).